The following is a 236-amino-acid chain: Leucyl/phenylalanyl-tRNA--protein transferase (236 aa).

The protein belongs to the L/F-transferase family.

The protein resides in the cytoplasm. The enzyme catalyses N-terminal L-lysyl-[protein] + L-leucyl-tRNA(Leu) = N-terminal L-leucyl-L-lysyl-[protein] + tRNA(Leu) + H(+). It catalyses the reaction N-terminal L-arginyl-[protein] + L-leucyl-tRNA(Leu) = N-terminal L-leucyl-L-arginyl-[protein] + tRNA(Leu) + H(+). The catalysed reaction is L-phenylalanyl-tRNA(Phe) + an N-terminal L-alpha-aminoacyl-[protein] = an N-terminal L-phenylalanyl-L-alpha-aminoacyl-[protein] + tRNA(Phe). Its function is as follows. Functions in the N-end rule pathway of protein degradation where it conjugates Leu, Phe and, less efficiently, Met from aminoacyl-tRNAs to the N-termini of proteins containing an N-terminal arginine or lysine. The chain is Leucyl/phenylalanyl-tRNA--protein transferase from Shewanella oneidensis (strain ATCC 700550 / JCM 31522 / CIP 106686 / LMG 19005 / NCIMB 14063 / MR-1).